Here is a 325-residue protein sequence, read N- to C-terminus: UDP-N-acetylglucosamine transporter (325 aa).

The next 8 membrane-spanning stretches (helical) occupy residues 8 to 24 (VSLGILVFQTTSLVLTM), 42 to 58 (AVVVAELLKIMACILLV), 138 to 154 (VYQWLSLVILMTGVAFV), 173 to 189 (FVGLMAVLTACFSSGFA), 209 to 225 (IQLGFFGSIFGLMGVYI), 246 to 262 (IVVVLQALGGLVIAAVI), 268 to 284 (ILKGFATSLSIILSTLI), and 295 to 311 (TSVFFLGAILVITATFL).

Belongs to the nucleotide-sugar transporter family. SLC35A subfamily. In terms of assembly, interacts with SLC35A2; the interaction is reduced in the presence of SLC35A4. Found in a complex with SLC35A2 and SLC35A4. Interacts with MGAT4B. In terms of processing, O-Glcnacylation regulates the stability of SLC35A3 and the specific complex formation with MGAT4B.

Its subcellular location is the golgi apparatus membrane. It carries out the reaction UMP(out) + UDP-N-acetyl-alpha-D-glucosamine(in) = UMP(in) + UDP-N-acetyl-alpha-D-glucosamine(out). In terms of biological role, transports diphosphate-N-acetylglucosamine (UDP-GlcNAc) from the cytosol into the lumen of the Golgi apparatus, functioning as an antiporter that exchanges UDP-N-acetyl-alpha-D-glucosamine for UMP. May supply UDP-GlcNAc as substrate for Golgi-resident glycosyltransferases that generate highly branched, multiantennary complex N-glycans and keratan sulfate. However, the exact role of SLC35A3 still needs to be elucidated, it could be a member of a catalytically more efficient multiprotein complex rather than function independently as a single transporter. The sequence is that of UDP-N-acetylglucosamine transporter (SLC35A3) from Homo sapiens (Human).